A 269-amino-acid polypeptide reads, in one-letter code: Ubiquinone/menaquinone biosynthesis C-methyltransferase UbiE (269 aa).

Residues Thr92, Asp113, and Asn141–Ala142 contribute to the S-adenosyl-L-methionine site.

This sequence belongs to the class I-like SAM-binding methyltransferase superfamily. MenG/UbiE family.

It carries out the reaction a 2-demethylmenaquinol + S-adenosyl-L-methionine = a menaquinol + S-adenosyl-L-homocysteine + H(+). The catalysed reaction is a 2-methoxy-6-(all-trans-polyprenyl)benzene-1,4-diol + S-adenosyl-L-methionine = a 5-methoxy-2-methyl-3-(all-trans-polyprenyl)benzene-1,4-diol + S-adenosyl-L-homocysteine + H(+). It participates in quinol/quinone metabolism; menaquinone biosynthesis; menaquinol from 1,4-dihydroxy-2-naphthoate: step 2/2. Its pathway is cofactor biosynthesis; ubiquinone biosynthesis. Its function is as follows. Methyltransferase required for the conversion of demethylmenaquinol (DMKH2) to menaquinol (MKH2) and the conversion of 2-polyprenyl-6-methoxy-1,4-benzoquinol (DDMQH2) to 2-polyprenyl-3-methyl-6-methoxy-1,4-benzoquinol (DMQH2). The chain is Ubiquinone/menaquinone biosynthesis C-methyltransferase UbiE from Brucella canis (strain ATCC 23365 / NCTC 10854 / RM-666).